Consider the following 527-residue polypeptide: Bifunctional purine biosynthesis protein PurH (527 aa).

In terms of domain architecture, MGS-like spans M1–T149.

This sequence belongs to the PurH family.

The enzyme catalyses (6R)-10-formyltetrahydrofolate + 5-amino-1-(5-phospho-beta-D-ribosyl)imidazole-4-carboxamide = 5-formamido-1-(5-phospho-D-ribosyl)imidazole-4-carboxamide + (6S)-5,6,7,8-tetrahydrofolate. The catalysed reaction is IMP + H2O = 5-formamido-1-(5-phospho-D-ribosyl)imidazole-4-carboxamide. Its pathway is purine metabolism; IMP biosynthesis via de novo pathway; 5-formamido-1-(5-phospho-D-ribosyl)imidazole-4-carboxamide from 5-amino-1-(5-phospho-D-ribosyl)imidazole-4-carboxamide (10-formyl THF route): step 1/1. The protein operates within purine metabolism; IMP biosynthesis via de novo pathway; IMP from 5-formamido-1-(5-phospho-D-ribosyl)imidazole-4-carboxamide: step 1/1. The protein is Bifunctional purine biosynthesis protein PurH of Xanthomonas campestris pv. campestris (strain 8004).